We begin with the raw amino-acid sequence, 437 residues long: MKAKGNQKTKVNIVTLGCSKNLVDSENLLTQLRGNGIEAEHESKNDNSNVVVINTCGFIDNAKQESIDTILRYIDAKENGLIDKIYVSGCLSQRYKDDMEREMPQVDAFFGSNELPAILKKFRADYKHELVGERLLTTPSHYAYVKIAEGCDRPCSFCAIPVMRGKHVSTPMEDLVKQAKGMAAKGTKELILIAQDLTYYGLDIYKKRNLSDLLKNLSDVEGIDWIRLQYAYPSGFPLDVLDVMAERSNICKYIDMPLQHGSSDMLKLMRRGIDRPKTEDLIKTIRDKVPGIAFRTTMIIGHPGETEKDFDELCSFVEEQRFDRLGAFTYSHEEHTHSYSMEDTIPQEEKEERQATIMSIQEGISAELNEKKIGNTYKVLFDRKEGGYFIGRTEHDSPEVDNEVMVSAKDQYVRIGDFANVKINDAAEFDLFGEIVK.

Residues 9–124 form the MTTase N-terminal domain; it reads TKVNIVTLGC…LPAILKKFRA (116 aa). 6 residues coordinate [4Fe-4S] cluster: Cys-18, Cys-56, Cys-90, Cys-151, Cys-155, and Cys-158. Residues 137–367 form the Radical SAM core domain; the sequence is TTPSHYAYVK…MSIQEGISAE (231 aa). Residues 370-437 enclose the TRAM domain; it reads EKKIGNTYKV…EFDLFGEIVK (68 aa).

Belongs to the methylthiotransferase family. RimO subfamily. It depends on [4Fe-4S] cluster as a cofactor.

The protein resides in the cytoplasm. The enzyme catalyses L-aspartate(89)-[ribosomal protein uS12]-hydrogen + (sulfur carrier)-SH + AH2 + 2 S-adenosyl-L-methionine = 3-methylsulfanyl-L-aspartate(89)-[ribosomal protein uS12]-hydrogen + (sulfur carrier)-H + 5'-deoxyadenosine + L-methionine + A + S-adenosyl-L-homocysteine + 2 H(+). Its function is as follows. Catalyzes the methylthiolation of an aspartic acid residue of ribosomal protein uS12. This Cytophaga hutchinsonii (strain ATCC 33406 / DSM 1761 / CIP 103989 / NBRC 15051 / NCIMB 9469 / D465) protein is Ribosomal protein uS12 methylthiotransferase RimO.